The following is a 444-amino-acid chain: UDP-N-acetylmuramate--L-alanine ligase (444 aa).

Position 110–116 (110–116 (GAHGKTS)) interacts with ATP.

It belongs to the MurCDEF family. Phosphorylated by StkP in vitro. Dephosphorylated by PhpP in vitro.

It is found in the cytoplasm. The catalysed reaction is UDP-N-acetyl-alpha-D-muramate + L-alanine + ATP = UDP-N-acetyl-alpha-D-muramoyl-L-alanine + ADP + phosphate + H(+). The protein operates within cell wall biogenesis; peptidoglycan biosynthesis. Functionally, cell wall formation. The chain is UDP-N-acetylmuramate--L-alanine ligase from Streptococcus pneumoniae serotype 4 (strain ATCC BAA-334 / TIGR4).